The chain runs to 349 residues: Anthranilate phosphoribosyltransferase (349 aa).

5-phospho-alpha-D-ribose 1-diphosphate is bound by residues glycine 94, 97–98 (GD), threonine 102, 104–107 (NIST), 122–130 (KHGNRSVSS), and serine 134. Glycine 94 provides a ligand contact to anthranilate. Residue serine 106 participates in Mg(2+) binding. Asparagine 125 contributes to the anthranilate binding site. Arginine 180 is a binding site for anthranilate. Residues aspartate 239 and glutamate 240 each coordinate Mg(2+).

Belongs to the anthranilate phosphoribosyltransferase family. As to quaternary structure, homodimer. Mg(2+) is required as a cofactor.

The enzyme catalyses N-(5-phospho-beta-D-ribosyl)anthranilate + diphosphate = 5-phospho-alpha-D-ribose 1-diphosphate + anthranilate. It functions in the pathway amino-acid biosynthesis; L-tryptophan biosynthesis; L-tryptophan from chorismate: step 2/5. Its function is as follows. Catalyzes the transfer of the phosphoribosyl group of 5-phosphorylribose-1-pyrophosphate (PRPP) to anthranilate to yield N-(5'-phosphoribosyl)-anthranilate (PRA). The sequence is that of Anthranilate phosphoribosyltransferase from Trichlorobacter lovleyi (strain ATCC BAA-1151 / DSM 17278 / SZ) (Geobacter lovleyi).